Consider the following 89-residue polypeptide: Nitrogen regulatory protein (89 aa).

The region spanning 6 to 89 (TILTPGRSLV…ALLHLEAPID (84 aa)) is the PTS EIIA type-2 domain. Histidine 68 serves as the catalytic Tele-phosphohistidine intermediate.

It is found in the cytoplasm. Seems to have a role in regulating nitrogen assimilation. This chain is Nitrogen regulatory protein (ptsN), found in Pseudomonas putida (Arthrobacter siderocapsulatus).